The primary structure comprises 370 residues: Queuine tRNA-ribosyltransferase (370 aa).

Residue aspartate 89 is the Proton acceptor of the active site. Substrate contacts are provided by residues 89–93, aspartate 143, glutamine 187, and glycine 214; that span reads DSGGF. The RNA binding stretch occupies residues 245–251; it reads GVGTPED. The active-site Nucleophile is the aspartate 264. Positions 269 to 273 are RNA binding; important for wobble base 34 recognition; it reads TRNAR. Zn(2+)-binding residues include cysteine 302, cysteine 304, cysteine 307, and histidine 333.

This sequence belongs to the queuine tRNA-ribosyltransferase family. In terms of assembly, homodimer. Within each dimer, one monomer is responsible for RNA recognition and catalysis, while the other monomer binds to the replacement base PreQ1. Requires Zn(2+) as cofactor.

The catalysed reaction is 7-aminomethyl-7-carbaguanine + guanosine(34) in tRNA = 7-aminomethyl-7-carbaguanosine(34) in tRNA + guanine. Its pathway is tRNA modification; tRNA-queuosine biosynthesis. Functionally, catalyzes the base-exchange of a guanine (G) residue with the queuine precursor 7-aminomethyl-7-deazaguanine (PreQ1) at position 34 (anticodon wobble position) in tRNAs with GU(N) anticodons (tRNA-Asp, -Asn, -His and -Tyr). Catalysis occurs through a double-displacement mechanism. The nucleophile active site attacks the C1' of nucleotide 34 to detach the guanine base from the RNA, forming a covalent enzyme-RNA intermediate. The proton acceptor active site deprotonates the incoming PreQ1, allowing a nucleophilic attack on the C1' of the ribose to form the product. After dissociation, two additional enzymatic reactions on the tRNA convert PreQ1 to queuine (Q), resulting in the hypermodified nucleoside queuosine (7-(((4,5-cis-dihydroxy-2-cyclopenten-1-yl)amino)methyl)-7-deazaguanosine). The polypeptide is Queuine tRNA-ribosyltransferase (Aromatoleum aromaticum (strain DSM 19018 / LMG 30748 / EbN1) (Azoarcus sp. (strain EbN1))).